A 392-amino-acid polypeptide reads, in one-letter code: Extracellular metalloproteinase 4 (392 aa).

Positions 1–9 (VHSVVDYVS) are excised as a propeptide. Asn27 and Asn176 each carry an N-linked (GlcNAc...) asparagine glycan. His193 provides a ligand contact to Zn(2+). Glu194 is an active-site residue. Residue His197 participates in Zn(2+) binding. Residues Asn359 and Asn385 are each glycosylated (N-linked (GlcNAc...) asparagine).

It belongs to the peptidase M36 family. Zn(2+) serves as cofactor.

The protein localises to the secreted. Functionally, secreted metalloproteinase probably acting as a virulence factor. In Trichophyton violaceum, this protein is Extracellular metalloproteinase 4 (MEP4).